We begin with the raw amino-acid sequence, 1872 residues long: Chitin synthase 6 (1872 aa).

Residues 1–23 (MAQHLPPVGGNGGAHTQPSLPAL) are disordered. Residues 1 to 779 (MAQHLPPVGG…CWMEIAQLSD (779 aa)) enclose the Myosin motor domain. 104–111 (GESGSGKT) lines the ATP pocket. Asparagine 123, asparagine 291, asparagine 428, and asparagine 559 each carry an N-linked (GlcNAc...) asparagine glycan. Positions 587–652 (VMQASVSSKP…VNKPSEEGAS (66 aa)) are disordered. The tract at residues 659 to 683 (LDNVTKSFHAQNTNAYFVFCLKPND) is actin-binding. Asparagine 661 is a glycosylation site (N-linked (GlcNAc...) asparagine). 2 helical membrane-spanning segments follow: residues 881 to 901 (WVFITWMLTFFVPEFLIQHLG) and 920 to 940 (FIIWFSCLAAAFILVVFPMLV). The Cytochrome b5 heme-binding domain occupies 944-1003 (QYVFTGEELSAYNGKDGKASYAAIRGQVFDIGSFIPRHPLPYLPSKLFTQYAGTDITGLF). Asparagine 1030, asparagine 1055, and asparagine 1120 each carry an N-linked (GlcNAc...) asparagine glycan. Residues 1193 to 1213 (FILAVTIILCSIIAFKFLAAL) form a helical membrane-spanning segment. Asparagine 1450 and asparagine 1556 each carry an N-linked (GlcNAc...) asparagine glycan. 3 helical membrane passes run 1581-1601 (FIVFIDLLSTIIQPVTIAYIV), 1614-1634 (VPVLAFVLLAAVYGLQAIIFI), and 1641-1661 (MIAWMILYIIAMPIFSFGLPL). One can recognise a DEK-C domain in the interval 1814 to 1869 (LPSDDALLAEIREILRTADLMTVTKKGVKQELERRFGVNLDSRRAYINSATEALLS).

The protein belongs to the chitin synthase family. Class V subfamily.

It localises to the cell membrane. It carries out the reaction [(1-&gt;4)-N-acetyl-beta-D-glucosaminyl](n) + UDP-N-acetyl-alpha-D-glucosamine = [(1-&gt;4)-N-acetyl-beta-D-glucosaminyl](n+1) + UDP + H(+). In terms of biological role, polymerizes chitin, a structural polymer of the cell wall and septum, by transferring the sugar moiety of UDP-GlcNAc to the non-reducing end of the growing chitin polymer. Required for appressorium penetration and invasive growth. This chain is Chitin synthase 6, found in Pyricularia oryzae (strain 70-15 / ATCC MYA-4617 / FGSC 8958) (Rice blast fungus).